The primary structure comprises 377 residues: Dihydroorotate dehydrogenase (quinone) (377 aa).

FMN is bound by residues 78–82 (AGCDK) and Ala102. Residue Lys82 participates in substrate binding. 127–130 (NRLG) lines the substrate pocket. The FMN site is built by Asn159 and Asn192. Asn192 serves as a coordination point for substrate. Ser195 acts as the Nucleophile in catalysis. Residue Asn197 coordinates substrate. The FMN site is built by Lys230 and Thr258. 259 to 260 (NT) serves as a coordination point for substrate. FMN contacts are provided by residues Gly288, Gly317, and 338–339 (YT).

It belongs to the dihydroorotate dehydrogenase family. Type 2 subfamily. As to quaternary structure, monomer. Requires FMN as cofactor.

The protein resides in the cell membrane. The enzyme catalyses (S)-dihydroorotate + a quinone = orotate + a quinol. It participates in pyrimidine metabolism; UMP biosynthesis via de novo pathway; orotate from (S)-dihydroorotate (quinone route): step 1/1. Its function is as follows. Catalyzes the conversion of dihydroorotate to orotate with quinone as electron acceptor. This is Dihydroorotate dehydrogenase (quinone) from Rippkaea orientalis (strain PCC 8801 / RF-1) (Cyanothece sp. (strain PCC 8801)).